The chain runs to 610 residues: UvrABC system protein C (610 aa).

Positions 13–91 (HLPGVYRMYD…IKENQPKYNV (79 aa)) constitute a GIY-YIG domain. The UVR domain occupies 201–236 (GQVVEHLVQKMENAAQELDFEAAARFRDQIQSVRAV).

This sequence belongs to the UvrC family. Interacts with UvrB in an incision complex.

It is found in the cytoplasm. In terms of biological role, the UvrABC repair system catalyzes the recognition and processing of DNA lesions. UvrC both incises the 5' and 3' sides of the lesion. The N-terminal half is responsible for the 3' incision and the C-terminal half is responsible for the 5' incision. This Actinobacillus pleuropneumoniae serotype 5b (strain L20) protein is UvrABC system protein C.